The chain runs to 634 residues: Serine/threonine kinase NLK (634 aa).

The Protein kinase domain occupies 240–531; that stretch reads SQPDRPIGYG…VEEALQHRYL (292 aa). Residues 246 to 254 and Lys-269 each bind ATP; that span reads IGYGAFGVV. The active-site Proton acceptor is Asp-366.

Belongs to the protein kinase superfamily. CMGC Ser/Thr protein kinase family. MAP kinase subfamily. Component of the beta-catenin-lit-1 complex (also called the lit-1/wrm-1 complex or the wrm-1/lit-1 kinase complex) at least composed of lit-1 and wrm-1. Interacts with wrm-1 (via N-terminus); the interaction is direct and activates lit-1 kinase activity which leads to the phosphorylation of pop-1. This promotes pop-1 interaction with par-5 and translocation of pop-1 from the nucleus to the cytoplasm. Interacts with pop-1 (when phosphorylated on 'Ser-118' and 'Ser-127'); the interaction is dependent on the beta-catenin-lit-1 complex. The cofactor is Mg(2+). As to expression, expressed in the pharynx and seam and vulval cells.

It is found in the cytoplasm. Its subcellular location is the cell cortex. It localises to the nucleus. It catalyses the reaction L-seryl-[protein] + ATP = O-phospho-L-seryl-[protein] + ADP + H(+). The catalysed reaction is L-threonyl-[protein] + ATP = O-phospho-L-threonyl-[protein] + ADP + H(+). In terms of biological role, has a role in the Wnt signaling pathway controlling the asymmetry of cell divisions during embryogenesis. Operates in the AB and EMS cell lineages influencing cell specification. Required for body wall muscle development, endoderm development, pop-1 asymmetry and T-cell division asymmetry. Component of the beta-catenin-lit-1 complex which promotes the phosphorylation, down-regulation and subcellular relocation of pop-1. Regulates plp-1 nuclear localization in embryos. Plays a role in male tail tip morphogenesis. The protein is Serine/threonine kinase NLK of Caenorhabditis elegans.